The chain runs to 398 residues: MWTLVLNSGSSSLKFALLNPASGEVRLSGLAERLGTPAAAVKLEHSGQQESRSLEGGSYDAALGEVLRELETLGMRSAVRAVGHRVVHGGERFSAPVLVTPEVLEAVRACVPLAPLHNPANIVGIEAAQQAFPKLPHVAVFDTAFHQTMPEVAYRYAVPEAWYSQHGVRRYGFHGTSHAYVAGRAAEMLQRPLPTLNLITAHLGNGASVCAVAGGRSVDTSMGLTPLEGLIMGSRSGDVDPGLHDYLARQAGLSLSEITAALNKESGLLGLSGLTNDMRELEKAALTGHRGARLALGAFIYRLAKCMAGMAVALGRVDGVVFTGGIGENSRTVRGETLRRLGVLGLHLDEEANKALPRGDVGVISLPGGPVALVIPTHEELMIARETAVIVGGRGYAL.

Asn-7 provides a ligand contact to Mg(2+). Lys-14 is an ATP binding site. Arg-85 lines the substrate pocket. The active-site Proton donor/acceptor is the Asp-142. ATP is bound by residues 202–206 (HLGNG), 277–279 (DMR), and 325–329 (GIGEN). Mg(2+) is bound at residue Glu-379.

Belongs to the acetokinase family. Homodimer. Mg(2+) is required as a cofactor. Requires Mn(2+) as cofactor.

Its subcellular location is the cytoplasm. The enzyme catalyses acetate + ATP = acetyl phosphate + ADP. Its pathway is metabolic intermediate biosynthesis; acetyl-CoA biosynthesis; acetyl-CoA from acetate: step 1/2. Catalyzes the formation of acetyl phosphate from acetate and ATP. Can also catalyze the reverse reaction. The chain is Acetate kinase from Deinococcus radiodurans (strain ATCC 13939 / DSM 20539 / JCM 16871 / CCUG 27074 / LMG 4051 / NBRC 15346 / NCIMB 9279 / VKM B-1422 / R1).